We begin with the raw amino-acid sequence, 251 residues long: 7-cyano-7-deazaguanine synthase (251 aa).

The interval 1–21 (MSDLPRHSPRRQHAGESAVTA) is disordered. Residue 35 to 45 (YSGGMDSYTVL) participates in ATP binding. Zn(2+) contacts are provided by cysteine 212, cysteine 220, cysteine 223, and cysteine 226.

Belongs to the QueC family. Zn(2+) serves as cofactor.

The catalysed reaction is 7-carboxy-7-deazaguanine + NH4(+) + ATP = 7-cyano-7-deazaguanine + ADP + phosphate + H2O + H(+). It participates in purine metabolism; 7-cyano-7-deazaguanine biosynthesis. Its function is as follows. Catalyzes the ATP-dependent conversion of 7-carboxy-7-deazaguanine (CDG) to 7-cyano-7-deazaguanine (preQ(0)). This Chromohalobacter salexigens (strain ATCC BAA-138 / DSM 3043 / CIP 106854 / NCIMB 13768 / 1H11) protein is 7-cyano-7-deazaguanine synthase.